A 466-amino-acid polypeptide reads, in one-letter code: Aladin (466 aa).

WD repeat units follow at residues 135–174 (WLNS…TTAT), 179–218 (PSQT…HLGR), 229–269 (PNNL…MQPL), 271–310 (RLGP…TTER), and 378–418 (LVGG…FDLQ).

Its subcellular location is the nucleus. The protein resides in the nuclear pore complex. It is found in the cytoplasm. The protein localises to the cytoskeleton. It localises to the spindle. Functionally, involved in mitotic spindle assembly. The chain is Aladin from Drosophila melanogaster (Fruit fly).